The following is a 113-amino-acid chain: Large ribosomal subunit protein bL17 (113 aa).

This sequence belongs to the bacterial ribosomal protein bL17 family. In terms of assembly, part of the 50S ribosomal subunit. Contacts protein L32.

The protein is Large ribosomal subunit protein bL17 of Clostridioides difficile (strain 630) (Peptoclostridium difficile).